The sequence spans 94 residues: Co-chaperonin GroES (94 aa).

The protein belongs to the GroES chaperonin family. Heptamer of 7 subunits arranged in a ring. Interacts with the chaperonin GroEL.

The protein resides in the cytoplasm. Together with the chaperonin GroEL, plays an essential role in assisting protein folding. The GroEL-GroES system forms a nano-cage that allows encapsulation of the non-native substrate proteins and provides a physical environment optimized to promote and accelerate protein folding. GroES binds to the apical surface of the GroEL ring, thereby capping the opening of the GroEL channel. The sequence is that of Co-chaperonin GroES from Tetragenococcus halophilus (Pediococcus halophilus).